The primary structure comprises 89 residues: Small ribosomal subunit protein bS20 (89 aa).

Residues 1-12 (MANHKSAIKRHR) are compositionally biased toward basic residues. The tract at residues 1–26 (MANHKSAIKRHRQSVERAGRNRAART) is disordered.

The protein belongs to the bacterial ribosomal protein bS20 family.

Functionally, binds directly to 16S ribosomal RNA. The protein is Small ribosomal subunit protein bS20 of Desulfovibrio desulfuricans (strain ATCC 27774 / DSM 6949 / MB).